A 441-amino-acid polypeptide reads, in one-letter code: Glutamate-1-semialdehyde 2,1-aminomutase (441 aa).

Lysine 276 carries the post-translational modification N6-(pyridoxal phosphate)lysine.

Belongs to the class-III pyridoxal-phosphate-dependent aminotransferase family. HemL subfamily. In terms of assembly, homodimer. The cofactor is pyridoxal 5'-phosphate.

The protein resides in the cytoplasm. The catalysed reaction is (S)-4-amino-5-oxopentanoate = 5-aminolevulinate. It participates in porphyrin-containing compound metabolism; protoporphyrin-IX biosynthesis; 5-aminolevulinate from L-glutamyl-tRNA(Glu): step 2/2. The sequence is that of Glutamate-1-semialdehyde 2,1-aminomutase from Rhodococcus jostii (strain RHA1).